Here is a 375-residue protein sequence, read N- to C-terminus: Stimulator of interferon genes protein 2 (375 aa).

4 helical membrane-spanning segments follow: residues 30–50 (TATVTSAIVFVISGALLLLAV), 60–80 (IHFLVFTAALLTLSFVLGELV), 114–134 (AGSILVVAISSALTLCFVLYE), and 144–164 (YPILFFLNCLVVPQLSFLVGL). 3 residues coordinate 2',3'-cGAMP: Tyr-195, Arg-256, and Arg-262.

Belongs to the STING family.

Its subcellular location is the membrane. Its function is as follows. Facilitator of innate immune signaling that acts as a sensor of second messenger signals produced by cyclic GMP-AMP synthase-like receptors (cGLRs) and promotes the production of type I interferon. Innate immune response is triggered in response to nucleotides from viruses and bacteria delivered to the cytoplasm. Acts by binding cyclic dinucleotides: recognizes and binds 2'-3' linked cGAMP (2'-3'-cGAMP), a second messengers produced by cGLRs in response to nucleotides in the cytosol, such as double-stranded RNA (dsRNA). Upon binding to 2'-3'-cGAMP, oligomerizes and promotes the recruitment and subsequent activation of the transcription factor IRF3 to induce expression of type I interferon. The sequence is that of Stimulator of interferon genes protein 2 from Stylophora pistillata (Smooth cauliflower coral).